A 38-amino-acid chain; its full sequence is MSGPNPNKEPVDLNRTSLFWGLLLIFVLAVLFSSYFFN.

The chain crosses the membrane as a helical span at residues 17-37 (SLFWGLLLIFVLAVLFSSYFF).

It belongs to the PsbL family. PSII is composed of 1 copy each of membrane proteins PsbA, PsbB, PsbC, PsbD, PsbE, PsbF, PsbH, PsbI, PsbJ, PsbK, PsbL, PsbM, PsbT, PsbX, PsbY, PsbZ, Psb30/Ycf12, at least 3 peripheral proteins of the oxygen-evolving complex and a large number of cofactors. It forms dimeric complexes.

It is found in the plastid. Its subcellular location is the chloroplast thylakoid membrane. In terms of biological role, one of the components of the core complex of photosystem II (PSII). PSII is a light-driven water:plastoquinone oxidoreductase that uses light energy to abstract electrons from H(2)O, generating O(2) and a proton gradient subsequently used for ATP formation. It consists of a core antenna complex that captures photons, and an electron transfer chain that converts photonic excitation into a charge separation. This subunit is found at the monomer-monomer interface and is required for correct PSII assembly and/or dimerization. In Porphyra purpurea (Red seaweed), this protein is Photosystem II reaction center protein L.